Here is an 892-residue protein sequence, read N- to C-terminus: Translation initiation factor IF-2 (892 aa).

The segment at 88–305 (KKRTFVKRDP…SLQQGFQKPA (218 aa)) is disordered. Basic and acidic residues-rich tracts occupy residues 93–159 (VKRD…KDKV) and 166–216 (DMTK…EENK). Basic residues predominate over residues 254–269 (GRGRNAKAARPAKKGK). Positions 270–282 (HAESKADREEARA) are enriched in basic and acidic residues. Residues 391 to 560 (PRAPVVTIMG…LLQAEVLELK (170 aa)) form the tr-type G domain. Positions 400 to 407 (GHVDHGKT) are G1. Residue 400–407 (GHVDHGKT) participates in GTP binding. Residues 425 to 429 (GITQH) form a G2 region. Residues 446 to 449 (DTPG) form a G3 region. GTP contacts are provided by residues 446-450 (DTPGH) and 500-503 (NKID). The interval 500 to 503 (NKID) is G4. Residues 536 to 538 (SAK) form a G5 region.

The protein belongs to the TRAFAC class translation factor GTPase superfamily. Classic translation factor GTPase family. IF-2 subfamily.

It localises to the cytoplasm. Functionally, one of the essential components for the initiation of protein synthesis. Protects formylmethionyl-tRNA from spontaneous hydrolysis and promotes its binding to the 30S ribosomal subunits. Also involved in the hydrolysis of GTP during the formation of the 70S ribosomal complex. The chain is Translation initiation factor IF-2 from Salmonella agona (strain SL483).